The chain runs to 168 residues: Putative apoptosis regulator A9 (168 aa).

The helical transmembrane segment at 143–162 (SAFYFLTAAASCLTLLLLYF) threads the bilayer.

The protein localises to the host membrane. Its function is as follows. Suppresses apoptosis in host cell and thus facilitates production of progeny virions. This Alcelaphine herpesvirus 1 (strain C500) (AlHV-1) protein is Putative apoptosis regulator A9 (A9).